The following is an 816-amino-acid chain: Leucine--tRNA ligase (816 aa).

The 'HIGH' region motif lies at 40–51 (SYPSGSQLHAGH). The 'KMSKS' region motif lies at 576–580 (KMSKS). ATP is bound at residue Lys579.

The protein belongs to the class-I aminoacyl-tRNA synthetase family.

It is found in the cytoplasm. It carries out the reaction tRNA(Leu) + L-leucine + ATP = L-leucyl-tRNA(Leu) + AMP + diphosphate. The sequence is that of Leucine--tRNA ligase from Clostridium perfringens (strain SM101 / Type A).